Consider the following 126-residue polypeptide: Small ribosomal subunit protein uS13c (126 aa).

The interval 97–126 (PLRGQRTRTNARTRRGGKKTVAGKKKAPRK) is disordered. Residues 101 to 126 (QRTRTNARTRRGGKKTVAGKKKAPRK) are compositionally biased toward basic residues.

The protein belongs to the universal ribosomal protein uS13 family. Part of the 30S ribosomal subunit.

It localises to the plastid. The protein localises to the chloroplast. In terms of biological role, located at the top of the head of the 30S subunit, it contacts several helices of the 16S rRNA. The sequence is that of Small ribosomal subunit protein uS13c from Porphyra purpurea (Red seaweed).